The sequence spans 247 residues: Particulate methane monooxygenase beta subunit (247 aa).

6 consecutive transmembrane segments (helical) span residues 23-43, 59-79, 86-106, 111-131, 145-165, and 215-235; these read WMAL…HAML, LWVT…QSYL, PWGA…NRYF, WTYF…AIIL, AIVG…PIIA, and VSAF…HFIG.

As to quaternary structure, m.capsulatus has two forms of methane monooxygenase, a soluble (sMMO) and a membrane-bound (particulate) type (pMMO). The particulate type is a nonamer composed of three alpha:beta:gamma heterotrimeric protomers assembled into a cylindrical structure; the beta and gamma subunits comprise the bulk of the membrane-spanning regions and the soluble regions are derived primarily from alpha subunits which form two antiparallel beta-barrel-like structures each. This assembly, also called pMMO hydroxylase (pMMO-H), is proposed to associate with methanol dehydrogenase (MDH), also designated as pMMO-R, to form the pMMO-C complex which seems to have greater methane monooxygenase activity.

It is found in the membrane. The catalysed reaction is methane + a quinol + O2 = methanol + a quinone + H2O. Its function is as follows. Non-catalytic subunit of the methane monooxygenase that is responsible for the initial oxygenation of methane to methanol in methanotrophs. At least in vitro, specific quinols can replace NADH as reductants. This Methylococcus capsulatus (strain ATCC 33009 / NCIMB 11132 / Bath) protein is Particulate methane monooxygenase beta subunit (pmoA1).